Consider the following 274-residue polypeptide: Large ribosomal subunit protein uL2 (274 aa).

The segment at 220–265 (VRGAAMNPRDHPHGGGEGRAPRGMSTPKTKWGKPARGVKTRHNPRF) is disordered. The segment covering 227–239 (PRDHPHGGGEGRA) has biased composition (basic and acidic residues). Residues 249 to 262 (KWGKPARGVKTRHN) are compositionally biased toward basic residues.

It belongs to the universal ribosomal protein uL2 family. Part of the 50S ribosomal subunit. Forms a bridge to the 30S subunit in the 70S ribosome.

Its function is as follows. One of the primary rRNA binding proteins. Required for association of the 30S and 50S subunits to form the 70S ribosome, for tRNA binding and peptide bond formation. It has been suggested to have peptidyltransferase activity; this is somewhat controversial. Makes several contacts with the 16S rRNA in the 70S ribosome. This chain is Large ribosomal subunit protein uL2, found in Chloroflexus aurantiacus (strain ATCC 29364 / DSM 637 / Y-400-fl).